A 160-amino-acid chain; its full sequence is Pyruvoyl-dependent arginine decarboxylase (160 aa).

A Pyruvic acid (Ser) modification is found at serine 39.

This sequence belongs to the PdaD family. It depends on pyruvate as a cofactor.

The catalysed reaction is L-arginine + H(+) = agmatine + CO2. This Halobacterium salinarum (strain ATCC 29341 / DSM 671 / R1) protein is Pyruvoyl-dependent arginine decarboxylase (pdaD).